The primary structure comprises 222 residues: DUF1769 family protein (222 aa).

The protein belongs to the UPF0590 family.

It is found in the cytoplasm. Its subcellular location is the nucleus. The protein is DUF1769 family protein of Schizosaccharomyces pombe (strain 972 / ATCC 24843) (Fission yeast).